The primary structure comprises 151 residues: Probable transcriptional regulator syrB2 (151 aa).

The segment at 1–61 (MADESNTGSI…PRRYSEQQRK (61 aa)) is disordered. Low complexity predominate over residues 11-23 (AAAVAPNADVKAP). Basic residues predominate over residues 24 to 35 (AAKKKRSPRRQK).

The protein belongs to the SyrB family.

Its function is as follows. Seems to affect the transcription of cya3. May be negatively autoregulated. The protein is Probable transcriptional regulator syrB2 (syrB2) of Rhizobium meliloti (strain 1021) (Ensifer meliloti).